A 351-amino-acid chain; its full sequence is uncharacterized protein (351 aa).

This is an uncharacterized protein from Gallus gallus (Chicken).